The following is a 244-amino-acid chain: Type III pantothenate kinase (244 aa).

7 to 14 (DIGNTRLK) contacts ATP. Substrate-binding positions include tyrosine 95 and 102–105 (GIDR). The Proton acceptor role is filled by aspartate 104. Threonine 126 contacts ATP. Position 177 (threonine 177) interacts with substrate.

Belongs to the type III pantothenate kinase family. Homodimer. Requires NH4(+) as cofactor. K(+) serves as cofactor.

It localises to the cytoplasm. The catalysed reaction is (R)-pantothenate + ATP = (R)-4'-phosphopantothenate + ADP + H(+). It participates in cofactor biosynthesis; coenzyme A biosynthesis; CoA from (R)-pantothenate: step 1/5. Catalyzes the phosphorylation of pantothenate (Pan), the first step in CoA biosynthesis. This Acinetobacter baumannii (strain AB307-0294) protein is Type III pantothenate kinase.